The chain runs to 620 residues: Cryptochrome-1 (620 aa).

The Photolyase/cryptochrome alpha/beta domain occupies 3-132; the sequence is VNAVHWFRKG…EVIVRISHTL (130 aa). 3 consecutive short sequence motifs (LIR) follow at residues 50-54, 82-87, and 151-156; these read NRWRF, DVFPRL, and KRFQTL. FAD is bound at residue serine 252. 4 short sequence motifs (LIR) span residues 255 to 260, 271 to 276, 285 to 290, and 335 to 339; these read LRFGCL, DLYKKV, SLYGQL, and TGFPW. Glutamine 289 is an FAD binding site. Residue histidine 355 participates in FAD binding. The LIR 8 signature appears at 379–384; it reads KVFEEL. 387–389 contributes to the FAD binding site; it reads DAD. 5 short sequence motifs (LIR) span residues 395-400, 411-416, 430-435, 486-491, and 492-497; these read GSWMWL, HCYCPV, RRYLPV, QIYQQL, and SRYRGL. A disordered region spans residues 593-620; it reads TGISAGKRPNPEEETQSVGPKVQRQSTN.

This sequence belongs to the DNA photolyase class-1 family. In terms of assembly, component of the circadian core oscillator, which includes the CRY proteins, CLOCK or NPAS2, BMAL1 or BMAL2, CSNK1E, and the PER proteins. Requires FAD as cofactor. (6R)-5,10-methylene-5,6,7,8-tetrahydrofolate serves as cofactor. In terms of tissue distribution, expressed in the retina.

Its subcellular location is the cytoplasm. It is found in the nucleus. Functionally, transcriptional repressor which forms a core component of the circadian clock. The circadian clock, an internal time-keeping system, regulates various physiological processes through the generation of approximately 24 hour circadian rhythms in gene expression, which are translated into rhythms in metabolism and behavior. It is derived from the Latin roots 'circa' (about) and 'diem' (day) and acts as an important regulator of a wide array of physiological functions including metabolism, sleep, body temperature, blood pressure, endocrine, immune, cardiovascular, and renal function. Consists of two major components: the central clock, residing in the suprachiasmatic nucleus (SCN) of the brain, and the peripheral clocks that are present in nearly every tissue and organ system. Both the central and peripheral clocks can be reset by environmental cues, also known as Zeitgebers (German for 'timegivers'). The predominant Zeitgeber for the central clock is light, which is sensed by retina and signals directly to the SCN. The central clock entrains the peripheral clocks through neuronal and hormonal signals, body temperature and feeding-related cues, aligning all clocks with the external light/dark cycle. Circadian rhythms allow an organism to achieve temporal homeostasis with its environment at the molecular level by regulating gene expression to create a peak of protein expression once every 24 hours to control when a particular physiological process is most active with respect to the solar day. Transcription and translation of core clock components (CLOCK, NPAS2, BMAL1, BMAL2, PER1, PER2, PER3, CRY1 and CRY2) plays a critical role in rhythm generation, whereas delays imposed by post-translational modifications (PTMs) are important for determining the period (tau) of the rhythms (tau refers to the period of a rhythm and is the length, in time, of one complete cycle). A diurnal rhythm is synchronized with the day/night cycle, while the ultradian and infradian rhythms have a period shorter and longer than 24 hours, respectively. Disruptions in the circadian rhythms contribute to the pathology of cardiovascular diseases, cancer, metabolic syndromes and aging. A transcription/translation feedback loop (TTFL) forms the core of the molecular circadian clock mechanism. Transcription factors, CLOCK or NPAS2 and BMAL1 or BMAL2, form the positive limb of the feedback loop, act in the form of a heterodimer and activate the transcription of core clock genes and clock-controlled genes (involved in key metabolic processes), harboring E-box elements (5'-CACGTG-3') within their promoters. The core clock genes: PER1/2/3 and CRY1/2 which are transcriptional repressors form the negative limb of the feedback loop and interact with the CLOCK|NPAS2-BMAL1|BMAL2 heterodimer inhibiting its activity and thereby negatively regulating their own expression. This heterodimer also activates nuclear receptors NR1D1/2 and RORA/B/G, which form a second feedback loop and which activate and repress BMAL1 transcription, respectively. CRY1 and CRY2 have redundant functions but also differential and selective contributions at least in defining the pace of the SCN circadian clock and its circadian transcriptional outputs. More potent transcriptional repressor in cerebellum and liver than CRY2, though more effective in lengthening the period of the SCN oscillator. On its side, CRY2 seems to play a critical role in tuning SCN circadian period by opposing the action of CRY1. With CRY2, is dispensable for circadian rhythm generation but necessary for the development of intercellular networks for rhythm synchrony. Capable of translocating circadian clock core proteins such as PER proteins to the nucleus. Interacts with CLOCK-BMAL1 independently of PER proteins and is found at CLOCK-BMAL1-bound sites, suggesting that CRY may act as a molecular gatekeeper to maintain CLOCK-BMAL1 in a poised and repressed state until the proper time for transcriptional activation. This Erithacus rubecula (European robin) protein is Cryptochrome-1 (CRY1).